Reading from the N-terminus, the 355-residue chain is NADH-quinone oxidoreductase subunit H (355 aa).

8 consecutive transmembrane segments (helical) span residues 25-45 (IVRILVVSVVILLCVAYLILW), 91-111 (WLYLIAPVMTVVPAFAVWAVI), 126-146 (LLYAMAISSIGVYAVILAGWA), 170-190 (MGFALVLVLMTAGSLNLSEIV), 205-225 (FLSWNWLPLLPAFVVYFISGI), 252-272 (GMAFALFFLAEYINMIVISAL), 290-310 (FIPGIFWLVLKIFALLSVFIW), and 330-350 (VFLPVTVVWVVVVGFWMMSPL).

It belongs to the complex I subunit 1 family. NDH-1 is composed of 14 different subunits. Subunits NuoA, H, J, K, L, M, N constitute the membrane sector of the complex.

It is found in the cell inner membrane. It carries out the reaction a quinone + NADH + 5 H(+)(in) = a quinol + NAD(+) + 4 H(+)(out). In terms of biological role, NDH-1 shuttles electrons from NADH, via FMN and iron-sulfur (Fe-S) centers, to quinones in the respiratory chain. The immediate electron acceptor for the enzyme in this species is believed to be ubiquinone. Couples the redox reaction to proton translocation (for every two electrons transferred, four hydrogen ions are translocated across the cytoplasmic membrane), and thus conserves the redox energy in a proton gradient. This subunit may bind ubiquinone. The chain is NADH-quinone oxidoreductase subunit H from Burkholderia lata (strain ATCC 17760 / DSM 23089 / LMG 22485 / NCIMB 9086 / R18194 / 383).